A 164-amino-acid polypeptide reads, in one-letter code: NAD(P)H-quinone oxidoreductase subunit I, chloroplastic (164 aa).

4Fe-4S ferredoxin-type domains lie at 55 to 84 and 95 to 124; these read GRIH…VDWK and LNYS…MTEE. Residues Cys-64, Cys-67, Cys-70, Cys-74, Cys-104, Cys-107, Cys-110, and Cys-114 each contribute to the [4Fe-4S] cluster site.

It belongs to the complex I 23 kDa subunit family. NDH is composed of at least 16 different subunits, 5 of which are encoded in the nucleus. [4Fe-4S] cluster is required as a cofactor.

Its subcellular location is the plastid. The protein localises to the chloroplast thylakoid membrane. The enzyme catalyses a plastoquinone + NADH + (n+1) H(+)(in) = a plastoquinol + NAD(+) + n H(+)(out). It catalyses the reaction a plastoquinone + NADPH + (n+1) H(+)(in) = a plastoquinol + NADP(+) + n H(+)(out). NDH shuttles electrons from NAD(P)H:plastoquinone, via FMN and iron-sulfur (Fe-S) centers, to quinones in the photosynthetic chain and possibly in a chloroplast respiratory chain. The immediate electron acceptor for the enzyme in this species is believed to be plastoquinone. Couples the redox reaction to proton translocation, and thus conserves the redox energy in a proton gradient. The polypeptide is NAD(P)H-quinone oxidoreductase subunit I, chloroplastic (Daucus carota (Wild carrot)).